A 1172-amino-acid chain; its full sequence is Structural maintenance of chromosomes protein 2 (1172 aa).

32–39 (GLNGSGKS) is a binding site for ATP. Coiled coils occupy residues 172–204 (RMFE…EEIE) and 258–507 (SHIA…AYME). The 121-residue stretch at 520 to 640 (SKVKGLVAQL…CDTPESAKKV (121 aa)) folds into the SMC hinge domain. Residues 676–941 (LLQIQKLNSL…INHLEKENDW (266 aa)) adopt a coiled-coil conformation.

It belongs to the SMC family. SMC2 subfamily. In terms of assembly, forms a heterodimer with cut3/smc4. Component of the condensin complex, which contains the cut3 and cut14 heterodimer, and three non smc subunits that probably regulate the complex: cnd1, cnd2 and cnd3.

Its subcellular location is the nucleus. The protein localises to the cytoplasm. The protein resides in the chromosome. Its function is as follows. Central component of the condensin complex, a complex required for conversion of interphase chromatin into mitotic-like condense chromosomes. The condensin complex probably introduces positive supercoils into relaxed DNA in the presence of type I topoisomerases and converts nicked DNA into positive knotted forms in the presence of type II topoisomerases. This Schizosaccharomyces pombe (strain 972 / ATCC 24843) (Fission yeast) protein is Structural maintenance of chromosomes protein 2 (cut14).